We begin with the raw amino-acid sequence, 271 residues long: tRNA (guanine-N(1)-)-methyltransferase (271 aa).

S-adenosyl-L-methionine-binding positions include Gly120 and 145-150 (IGDYVL).

The protein belongs to the RNA methyltransferase TrmD family. As to quaternary structure, homodimer.

The protein resides in the cytoplasm. It carries out the reaction guanosine(37) in tRNA + S-adenosyl-L-methionine = N(1)-methylguanosine(37) in tRNA + S-adenosyl-L-homocysteine + H(+). Specifically methylates guanosine-37 in various tRNAs. The chain is tRNA (guanine-N(1)-)-methyltransferase from Bifidobacterium longum subsp. infantis (strain ATCC 15697 / DSM 20088 / JCM 1222 / NCTC 11817 / S12).